The following is a 397-amino-acid chain: Xylose isomerase (397 aa).

Active-site residues include H54 and D57. 7 residues coordinate Mg(2+): E181, E217, H220, D245, D255, D257, and D293.

This sequence belongs to the xylose isomerase family. As to quaternary structure, homotetramer. It depends on Mg(2+) as a cofactor.

It is found in the cytoplasm. The catalysed reaction is alpha-D-xylose = alpha-D-xylulofuranose. The sequence is that of Xylose isomerase from Clavibacter michiganensis subsp. michiganensis (strain NCPPB 382).